The primary structure comprises 340 residues: Protein S-acyltransferase 10 (340 aa).

2 helical membrane passes run 34–54 (LLLK…LFLF) and 66–86 (PWYM…YFVT). One can recognise a DHHC domain in the interval 162 to 212 (LTCGYCHVEQPPRTKHCHDCDRCVLQFDHHCVWLGTCIGQKNHSKFWWYIC). The active-site S-palmitoyl cysteine intermediate is Cys192. The next 2 membrane-spanning stretches (helical) occupy residues 207 to 227 (FWWY…MYVD) and 241 to 261 (IIIL…LLLI).

This sequence belongs to the DHHC palmitoyltransferase family. In terms of tissue distribution, expressed in mature embryos, embryo sacs, cotyledons, whole seedlings, hydathodes, guard cells, sites of lateral root initiation, root tips and phloem, but not in xylem.

The protein resides in the vacuole membrane. It catalyses the reaction L-cysteinyl-[protein] + hexadecanoyl-CoA = S-hexadecanoyl-L-cysteinyl-[protein] + CoA. In terms of biological role, S-acyltransferase involved in protein lipid modification. Catalyzes the palmitoylation of proteins peripheral or integral to the tonoplast. Required for the tonoplast localization of CBL2, CBL3 and CBL6, but not for the plasma membrane localization of CBL9, for the endosome localization of RABF1 or for the endomembrane localization of RABF2B. The sequence is that of Protein S-acyltransferase 10 (PAT10) from Arabidopsis thaliana (Mouse-ear cress).